The following is a 395-amino-acid chain: Probable L-tyrosine/L-aspartate decarboxylase (395 aa).

Position 242 is an N6-(pyridoxal phosphate)lysine (Lys-242).

Belongs to the group II decarboxylase family. MfnA subfamily. It depends on pyridoxal 5'-phosphate as a cofactor.

The catalysed reaction is L-tyrosine + H(+) = tyramine + CO2. It carries out the reaction L-aspartate + H(+) = beta-alanine + CO2. It functions in the pathway cofactor biosynthesis; methanofuran biosynthesis. Its pathway is cofactor biosynthesis; coenzyme A biosynthesis. Its function is as follows. Catalyzes the decarboxylation of L-tyrosine to produce tyramine for methanofuran biosynthesis. Can also catalyze the decarboxylation of L-aspartate to produce beta-alanine for coenzyme A (CoA) biosynthesis. This Methanosarcina barkeri (strain Fusaro / DSM 804) protein is Probable L-tyrosine/L-aspartate decarboxylase.